The chain runs to 112 residues: Putative regulatory protein DP2861 (112 aa).

Belongs to the RemA family.

In Desulfotalea psychrophila (strain LSv54 / DSM 12343), this protein is Putative regulatory protein DP2861.